Consider the following 338-residue polypeptide: Tagatose 1,6-diphosphate aldolase (338 aa).

The protein belongs to the aldolase LacD family.

It carries out the reaction D-tagatofuranose 1,6-bisphosphate = D-glyceraldehyde 3-phosphate + dihydroxyacetone phosphate. It participates in carbohydrate metabolism; D-tagatose 6-phosphate degradation; D-glyceraldehyde 3-phosphate and glycerone phosphate from D-tagatose 6-phosphate: step 2/2. This Listeria monocytogenes serovar 1/2a (strain ATCC BAA-679 / EGD-e) protein is Tagatose 1,6-diphosphate aldolase.